Here is an 886-residue protein sequence, read N- to C-terminus: DNA mismatch repair protein MutS (886 aa).

641-648 (GPNMAGKS) contacts ATP.

It belongs to the DNA mismatch repair MutS family.

In terms of biological role, this protein is involved in the repair of mismatches in DNA. It is possible that it carries out the mismatch recognition step. This protein has a weak ATPase activity. The polypeptide is DNA mismatch repair protein MutS (Rickettsia akari (strain Hartford)).